The following is a 1431-amino-acid chain: Protein CFT1 (1431 aa).

Residues 721–759 (EPSKSESSEPISHQIDSENKPNITNGINGTTARSARQTQ) form a disordered region. The segment covering 740–759 (KPNITNGINGTTARSARQTQ) has biased composition (polar residues).

This sequence belongs to the CFT1 family.

The protein resides in the nucleus. Functionally, RNA-binding component of the cleavage and polyadenylation factor (CPF) complex, which plays a key role in polyadenylation-dependent pre-mRNA 3'-end formation and cooperates with cleavage factors including the CFIA complex and NAB4/CFIB. Involved in poly(A) site recognition. May be involved in coupling transcription termination and mRNA 3'-end formation. In Cryptococcus neoformans var. neoformans serotype D (strain B-3501A) (Filobasidiella neoformans), this protein is Protein CFT1 (CFT1).